A 1171-amino-acid polypeptide reads, in one-letter code: MEIEPPQAVEVVDPEVRSYVYSLVTALGGTAGNETGRYVLGDDALGCLRDLKKWLRFYDEKLNRMDVARCLAECKLLNGDLVPIISLYGDAEQSDKHKARIMLACLELLVPLTWPVEVHGQMTFNHHRHTPYLQYSQVEYKRGILGFAPSPILRALIRVGLPSMAIPRSERSTRDEGIIRLMLYFFRNIAVISSPPNLPIDSDDDKATRSATINAFQQQDVFALLLTMCSNMGNDFTFQDVIILEILFNLVKGVDVDQLFKLNERAGTIKTDDLQDILQKEDELNREHSKNAPTRHGRFGTMIWVKRDDEKLSTVSGQDVLKGDRATFLKMDKTKKWNKPKFKREVVDPSSNNFNLKVRLTSSATKHLRTFVEEFLDSGFNPLFTHLRKAIEREADRVTESTSRQFWYAVSWFLHAERARREHQKETRQRSKGTSREIEPDSFSLVASVLNQETFVGLNRFMQHSIDFKDWQDLTAGMKCLTQILLTVQEMAISPLEEDQEIAENIQSRIFYEETTHDRVLSILRNYKDQGFWYLDACTELAHVFLRMLEQYSKQNVDMQVRSRRRARRKQAQAAVPNQNETEAGGEHDSDTEDIAEAHQTVTERSFDFKRFSVRFCTQKSVDTFVALTKYYRELDSEQLKRAHRFFYRVAFKQDMSVLLFRVDIISLLFKMIKGPEGLDPSKPPFKDWEELIRQIFKKLVRKLGERPELVVELLFSKINATVFYLEYGHEKQTMSESRPATELELKPGSASTLDEKIRIVVSALIQEDKKPLVKWLSQVLGSAASERLSWEMEAEARATSSPQEQSDRSKAPSIAVLPEDDGCRTAMFRNARLRLLMRLAGLERLDEDVLGASWMIPSSVPSSNLKEYHELIEKHCESPAEDIDGVDPRDLMRRKRTAADTDSSRHEFTENVNFGSDSEGEDDGVLFPPNLPERSKALKTLKQRRRRRRRSDDAEESGPDEAVLEARRTAREKNALERQRKIKSDLYVHASDDESDEEADIEFFAKEEMRRQAQARRVAEALETGMPENNTTKKKSKASAGRKRKVKPVLELDDDDSEASPPKRRRSDEVIESDSDGELMVGIGSTSPRRSQTPPTSADNIFGSEKSPSPMFPWSVGVDQMMAKLQGKDEASADNGESNEDEGEDVLSGTGRTRRRRTMGGFVIGSDSDS.

Disordered stretches follow at residues 568–592 (RRKQ…DSDT) and 880–1171 (PAED…DSDS). Residues 887–910 (VDPRDLMRRKRTAADTDSSRHEFT) show a composition bias toward basic and acidic residues. The span at 938–950 (ALKTLKQRRRRRR) shows a compositional bias: basic residues. The segment covering 954 to 964 (DAEESGPDEAV) has biased composition (acidic residues). Over residues 965–993 (LEARRTAREKNALERQRKIKSDLYVHASD) the composition is skewed to basic and acidic residues. A compositionally biased stretch (basic residues) spans 1033 to 1048 (TKKKSKASAGRKRKVK). The segment covering 1085–1100 (GSTSPRRSQTPPTSAD) has biased composition (polar residues).

Belongs to the timeless family. In terms of assembly, component of the fork protection complex (FPC) consisting of TOF1 and CSM3.

The protein resides in the nucleus. Its function is as follows. Forms a fork protection complex (FPC) with CSM3 and which is required for chromosome segregation during meiosis and DNA damage repair. FPC coordinates leading and lagging strand synthesis and moves with the replication fork. FPC stabilizes replication forks in a configuration that is recognized by replication checkpoint sensors. The sequence is that of Topoisomerase 1-associated factor 1 (TOF1) from Coccidioides immitis (strain RS) (Valley fever fungus).